The following is a 344-amino-acid chain: MSNTLFSLAFGVGSQNRQGAWLEVFYAQPLLNPSAELVAAVAPVLGYEGGNQAIAFSNAQAAQLAEALKGVDAAQAALLTRLAESHKPLVATLLAEDAALSSTPEAYLKLHLLSHRLVKPHGVSLAGIFPLLPNVAWTNQGAVDLGELAELQLEARLKGELLEVFSVDKFPKMTDYVVPAGVRIADTARVRLGAYIGEGTTIMHEGFVNFNAGTEGPGMIEGRVSAGVFVGKGSDLGGGCSTMGTLSGGGNIVIKVGEGCLIGANAGIGIPLGDRNTVEAGLYITAGTKVNLLDENNELVKVVKARDLAGQTDLLFRRNSLNGAVECKTHKSAIELNEALHAHN.

Residue E205 coordinates Mg(2+). The Acyl-anhydride intermediate role is filled by E221. Succinyl-CoA is bound by residues R223, G238, S241, A264, 279 to 280, G287, K304, and 317 to 320; these read EA and RRNS.

The protein belongs to the type 2 tetrahydrodipicolinate N-succinyltransferase family. Homotrimer.

It is found in the cytoplasm. It carries out the reaction (S)-2,3,4,5-tetrahydrodipicolinate + succinyl-CoA + H2O = (S)-2-succinylamino-6-oxoheptanedioate + CoA. Its pathway is amino-acid biosynthesis; L-lysine biosynthesis via DAP pathway; LL-2,6-diaminopimelate from (S)-tetrahydrodipicolinate (succinylase route): step 1/3. Functionally, catalyzes the conversion of the cyclic tetrahydrodipicolinate (THDP) into the acyclic N-succinyl-L-2-amino-6-oxopimelate using succinyl-CoA. The chain is 2,3,4,5-tetrahydropyridine-2,6-dicarboxylate N-succinyltransferase from Pseudomonas putida (strain ATCC 47054 / DSM 6125 / CFBP 8728 / NCIMB 11950 / KT2440).